The chain runs to 118 residues: Acidic phospholipase A2 (118 aa).

Tyr25, Gly27, and Gly29 together coordinate Ca(2+). The active site involves His45. Asp46 is a binding site for Ca(2+). Asp86 is a catalytic residue.

Belongs to the phospholipase A2 family. Group II subfamily. D49 sub-subfamily. Ca(2+) is required as a cofactor. In terms of processing, six disulfide bonds are present. In terms of tissue distribution, expressed by the venom gland.

The protein localises to the secreted. The enzyme catalyses a 1,2-diacyl-sn-glycero-3-phosphocholine + H2O = a 1-acyl-sn-glycero-3-phosphocholine + a fatty acid + H(+). Functionally, PLA2 catalyzes the calcium-dependent hydrolysis of the 2-acyl groups in 3-sn-phosphoglycerides. This chain is Acidic phospholipase A2, found in Bitis gabonica (Gaboon adder).